Here is a 484-residue protein sequence, read N- to C-terminus: NADH-quinone oxidoreductase subunit N (484 aa).

14 consecutive transmembrane segments (helical) span residues 11–31 (SLWIALPEIFLLSAIVIVLLI), 42–62 (VTYYLIQLSLFITGLLAFNLI), 79–98 (MASVFKVFMMAATMVAMVYS), 113–133 (FVLVLLSVLGMMVMVSGYSLL), 134–154 (TLYLGLEILSLSLYALIAIAR), 167–187 (FVLGAIASGLLLYGMSMIYGI), 211–231 (LIINFGLVFLVIGIAFKLGAV), 248–268 (VTLFISTVPKIAAFAMLVRIL), 279–299 (WSDLFMVLSILSIALGSVVAL), 313–333 (ISHVGFIMLGFVAGTPIGYGA), 335–355 (AFYMLVYVLMSLAAFGMIILL), 378–398 (FALMMLIIILSMAGVPPLVGF), 408–428 (VVSAGFITIAVIVVIFAVISA), and 457–477 (LVLSINAILILAVGLFPDFWM).

It belongs to the complex I subunit 2 family. In terms of assembly, NDH-1 is composed of 14 different subunits. Subunits NuoA, H, J, K, L, M, N constitute the membrane sector of the complex.

It is found in the cell inner membrane. The enzyme catalyses a quinone + NADH + 5 H(+)(in) = a quinol + NAD(+) + 4 H(+)(out). In terms of biological role, NDH-1 shuttles electrons from NADH, via FMN and iron-sulfur (Fe-S) centers, to quinones in the respiratory chain. The immediate electron acceptor for the enzyme in this species is believed to be ubiquinone. Couples the redox reaction to proton translocation (for every two electrons transferred, four hydrogen ions are translocated across the cytoplasmic membrane), and thus conserves the redox energy in a proton gradient. The protein is NADH-quinone oxidoreductase subunit N of Ruthia magnifica subsp. Calyptogena magnifica.